Consider the following 350-residue polypeptide: CMP-N-acetylneuraminate-beta-galactosamide-alpha-2,3-sialyltransferase 2 (350 aa).

Topologically, residues 1–6 (MKCSLR) are cytoplasmic. A helical; Signal-anchor for type II membrane protein membrane pass occupies residues 7–27 (VWFLSMAFLLVFIMSLLFTYS). Residues 28 to 350 (HHSMATLPYL…ASKIEVYRGN (323 aa)) lie on the Lumenal side of the membrane. Cystine bridges form between Cys-70–Cys-75, Cys-72–Cys-149, and Cys-152–Cys-291. Substrate contacts are provided by Gln-116, Asn-157, and Asn-180. An N-linked (GlcNAc...) asparagine glycan is attached at Asn-211. Residues Tyr-240, Tyr-276, Gly-280, Gly-300, His-309, and His-326 each contribute to the substrate site.

It belongs to the glycosyltransferase 29 family. Homodimer; disulfide-linked. Homodimer formation occurs in the endoplasmic reticulum. In terms of processing, the soluble form derives from the membrane form by proteolytic processing. Post-translationally, N-glycosylated; necessary for proper exit from endoplasmic reticulum and trafficking to the Golgi apparatus. Strongly expressed in brain and liver and to a lesser extent in heart and kidney. Scarcely detectable in lung, pancreas, spleen and submaxillary gland. Expressed in L5 dorsal root ganglion (DRG) neurons (at protein level).

The protein resides in the golgi apparatus. It localises to the golgi stack membrane. It is found in the secreted. The catalysed reaction is a beta-D-galactosyl-(1-&gt;3)-N-acetyl-alpha-D-galactosaminyl derivative + CMP-N-acetyl-beta-neuraminate = an N-acetyl-alpha-neuraminyl-(2-&gt;3)-beta-D-galactosyl-(1-&gt;3)-N-acetyl-alpha-D-galactosaminyl derivative + CMP + H(+). It catalyses the reaction a ganglioside GM1 (d18:1(4E)) + CMP-N-acetyl-beta-neuraminate = a ganglioside GD1a (d18:1(4E)) + CMP + H(+). It carries out the reaction ganglioside GM1 (d18:1(4E)/18:0) + CMP-N-acetyl-beta-neuraminate = ganglioside GD1a (18:1(4E)/18:0) + CMP + H(+). The enzyme catalyses a ganglioside GA1 + CMP-N-acetyl-beta-neuraminate = a ganglioside GM1b + CMP + H(+). The catalysed reaction is a ganglioside GA1 (d18:1(4E)) + CMP-N-acetyl-beta-neuraminate = a ganglioside GM1b (d18:1(4E)) + CMP + H(+). It catalyses the reaction a ganglioside GD1b + CMP-N-acetyl-beta-neuraminate = a ganglioside GT1b + CMP + H(+). It carries out the reaction a ganglioside GD1b (d18:1(4E)) + CMP-N-acetyl-beta-neuraminate = a ganglioside GT1b (d18:1(4E)) + CMP + H(+). The enzyme catalyses a globoside GalGb4Cer + CMP-N-acetyl-beta-neuraminate = a globoside MSGG + CMP + H(+). The protein operates within protein modification; protein glycosylation. Its pathway is glycolipid biosynthesis. A beta-galactoside alpha2-3 sialyltransferase primarily involved in terminal sialylation of ganglio and globo series glycolipids. Catalyzes the transfer of sialic acid (N-acetyl-neuraminic acid; Neu5Ac) from the nucleotide sugar donor CMP-Neu5Ac onto acceptor Galbeta-(1-&gt;3)-GalNAc-terminated glycoconjugates through an alpha2-3 linkage. Sialylates GM1/GM1a, GA1/asialo-GM1 and GD1b gangliosides to form GD1a, GM1b and GT1b, respectively. Together with ST3GAL3, primarily responsible for biosynthesis of brain GD1a and GT1b that function as ligands for myelin-associated glycoprotein MAG on axons, regulating MAG expression and axonal myelin stability and regeneration. Via GT1b regulates TLR2 signaling in spinal cord microglia in response to nerve injury. Responsible for the sialylation of the pluripotent stem cell- and cancer stem cell-associated antigen SSEA3, forming SSEA4. Sialylates with low efficiency asialofetuin, presumably onto O-glycosidically linked Galbeta-(1-&gt;3)-GalNAc-O-Ser. The polypeptide is CMP-N-acetylneuraminate-beta-galactosamide-alpha-2,3-sialyltransferase 2 (Mus musculus (Mouse)).